The primary structure comprises 186 residues: Ribosome-recycling factor (186 aa).

This sequence belongs to the RRF family.

It is found in the cytoplasm. Functionally, responsible for the release of ribosomes from messenger RNA at the termination of protein biosynthesis. May increase the efficiency of translation by recycling ribosomes from one round of translation to another. The protein is Ribosome-recycling factor of Bacteroides thetaiotaomicron (strain ATCC 29148 / DSM 2079 / JCM 5827 / CCUG 10774 / NCTC 10582 / VPI-5482 / E50).